Here is a 374-residue protein sequence, read N- to C-terminus: Pectate lyase 3 (374 aa).

A signal peptide spans 1-22 (MKYLLPSAAAGLLLLAAQPTMA). An intrachain disulfide couples Cys93 to Cys176. The Ca(2+) site is built by Asp150, Asp152, Glu187, and Asp191. Arg239 is an active-site residue. A disulfide bridge connects residues Cys350 and Cys373.

This sequence belongs to the polysaccharide lyase 1 family. PLADES subfamily. Ca(2+) is required as a cofactor.

It localises to the secreted. It carries out the reaction Eliminative cleavage of (1-&gt;4)-alpha-D-galacturonan to give oligosaccharides with 4-deoxy-alpha-D-galact-4-enuronosyl groups at their non-reducing ends.. It functions in the pathway glycan metabolism; pectin degradation; 2-dehydro-3-deoxy-D-gluconate from pectin: step 2/5. In terms of biological role, involved in maceration and soft-rotting of plant tissue. The protein is Pectate lyase 3 (pel3) of Pectobacterium carotovorum subsp. carotovorum (Erwinia carotovora subsp. carotovora).